Consider the following 284-residue polypeptide: Bifunctional protein FolD (284 aa).

NADP(+)-binding positions include G166–S168, S191, and I232.

Belongs to the tetrahydrofolate dehydrogenase/cyclohydrolase family. Homodimer.

The enzyme catalyses (6R)-5,10-methylene-5,6,7,8-tetrahydrofolate + NADP(+) = (6R)-5,10-methenyltetrahydrofolate + NADPH. The catalysed reaction is (6R)-5,10-methenyltetrahydrofolate + H2O = (6R)-10-formyltetrahydrofolate + H(+). It functions in the pathway one-carbon metabolism; tetrahydrofolate interconversion. In terms of biological role, catalyzes the oxidation of 5,10-methylenetetrahydrofolate to 5,10-methenyltetrahydrofolate and then the hydrolysis of 5,10-methenyltetrahydrofolate to 10-formyltetrahydrofolate. The chain is Bifunctional protein FolD from Neisseria meningitidis serogroup A / serotype 4A (strain DSM 15465 / Z2491).